The chain runs to 287 residues: Shikimate kinase (287 aa).

An ATP-binding site is contributed by P87–A97.

It belongs to the GHMP kinase family. Archaeal shikimate kinase subfamily.

Its subcellular location is the cytoplasm. It carries out the reaction shikimate + ATP = 3-phosphoshikimate + ADP + H(+). The protein operates within metabolic intermediate biosynthesis; chorismate biosynthesis; chorismate from D-erythrose 4-phosphate and phosphoenolpyruvate: step 5/7. This Methanococcoides burtonii (strain DSM 6242 / NBRC 107633 / OCM 468 / ACE-M) protein is Shikimate kinase.